Reading from the N-terminus, the 497-residue chain is Serine hydroxymethyltransferase (497 aa).

Residues L176 and 180–182 contribute to the (6S)-5,6,7,8-tetrahydrofolate site; that span reads GHL. K289 bears the N6-(pyridoxal phosphate)lysine mark.

It belongs to the SHMT family. As to quaternary structure, homodimer. Requires pyridoxal 5'-phosphate as cofactor.

Its subcellular location is the cytoplasm. The catalysed reaction is (6R)-5,10-methylene-5,6,7,8-tetrahydrofolate + glycine + H2O = (6S)-5,6,7,8-tetrahydrofolate + L-serine. Its pathway is one-carbon metabolism; tetrahydrofolate interconversion. It participates in amino-acid biosynthesis; glycine biosynthesis; glycine from L-serine: step 1/1. Its function is as follows. Catalyzes the reversible interconversion of serine and glycine with tetrahydrofolate (THF) serving as the one-carbon carrier. This reaction serves as the major source of one-carbon groups required for the biosynthesis of purines, thymidylate, methionine, and other important biomolecules. Also exhibits THF-independent aldolase activity toward beta-hydroxyamino acids, producing glycine and aldehydes, via a retro-aldol mechanism. The protein is Serine hydroxymethyltransferase of Chlamydia trachomatis serovar A (strain ATCC VR-571B / DSM 19440 / HAR-13).